Consider the following 486-residue polypeptide: ATP synthase subunit beta (486 aa).

Position 164-171 (164-171 (GGAGVGKT)) interacts with ATP.

It belongs to the ATPase alpha/beta chains family. As to quaternary structure, F-type ATPases have 2 components, CF(1) - the catalytic core - and CF(0) - the membrane proton channel. CF(1) has five subunits: alpha(3), beta(3), gamma(1), delta(1), epsilon(1). CF(0) has four main subunits: a(1), b(1), b'(1) and c(9-12).

It is found in the cellular thylakoid membrane. The enzyme catalyses ATP + H2O + 4 H(+)(in) = ADP + phosphate + 5 H(+)(out). Its function is as follows. Produces ATP from ADP in the presence of a proton gradient across the membrane. The catalytic sites are hosted primarily by the beta subunits. The protein is ATP synthase subunit beta of Prochlorococcus marinus (strain MIT 9515).